Consider the following 94-residue polypeptide: Integration host factor subunit beta (94 aa).

Belongs to the bacterial histone-like protein family. As to quaternary structure, heterodimer of an alpha and a beta chain.

This protein is one of the two subunits of integration host factor, a specific DNA-binding protein that functions in genetic recombination as well as in transcriptional and translational control. The protein is Integration host factor subunit beta of Citrobacter koseri (strain ATCC BAA-895 / CDC 4225-83 / SGSC4696).